The primary structure comprises 204 residues: Large ribosomal subunit protein uL22m (204 aa).

The transit peptide at 1–27 (MAASITASVWGTLLKIHRGLTASGCLP) directs the protein to the mitochondrion.

Belongs to the universal ribosomal protein uL22 family. Component of the mitochondrial ribosome large subunit (39S) which comprises a 16S rRNA and about 50 distinct proteins.

The protein localises to the mitochondrion. This Xenopus tropicalis (Western clawed frog) protein is Large ribosomal subunit protein uL22m (mrpl22).